The primary structure comprises 992 residues: UPF0182 protein BCG_3215c (992 aa).

The next 7 helical transmembrane spans lie at 18–38 (ILIM…RLID), 63–83 (IVVC…GLAL), 113–133 (LVGI…AQSY), 175–195 (LVSV…FGGI), 210–230 (VQLV…YWLD), 259–279 (KLIL…AIAL), and 287–307 (IGLV…PLIV). The disordered stretch occupies residues 906–938 (PTEAAVPPSPAANPPPPASGPQPPPVTAAPPVP). Positions 912–938 (PPSPAANPPPPASGPQPPPVTAAPPVP) are enriched in pro residues.

This sequence belongs to the UPF0182 family.

The protein resides in the cell membrane. The protein is UPF0182 protein BCG_3215c of Mycobacterium bovis (strain BCG / Pasteur 1173P2).